The chain runs to 457 residues: Bifunctional protein GlmU (457 aa).

Residues 1-227 (MTQLSVVILA…FMEVEGANNR (227 aa)) form a pyrophosphorylase region. Residues 9 to 12 (LAAG), lysine 23, glutamine 74, 79 to 80 (GT), 101 to 103 (YGD), glycine 138, glutamate 152, asparagine 167, and asparagine 225 contribute to the UDP-N-acetyl-alpha-D-glucosamine site. Residue aspartate 103 participates in Mg(2+) binding. Asparagine 225 is a binding site for Mg(2+). A linker region spans residues 228–248 (LQLAALERFYQKTQAEKLLLA). An N-acetyltransferase region spans residues 249-457 (GVRLIDPARF…QRPTKKKIAD (209 aa)). The UDP-N-acetyl-alpha-D-glucosamine site is built by arginine 331 and lysine 349. Residue histidine 361 is the Proton acceptor of the active site. UDP-N-acetyl-alpha-D-glucosamine contacts are provided by tyrosine 364 and asparagine 375. Residues alanine 378, 384–385 (NY), serine 403, alanine 421, and arginine 438 each bind acetyl-CoA.

This sequence in the N-terminal section; belongs to the N-acetylglucosamine-1-phosphate uridyltransferase family. The protein in the C-terminal section; belongs to the transferase hexapeptide repeat family. As to quaternary structure, homotrimer. Requires Mg(2+) as cofactor.

It localises to the cytoplasm. The catalysed reaction is alpha-D-glucosamine 1-phosphate + acetyl-CoA = N-acetyl-alpha-D-glucosamine 1-phosphate + CoA + H(+). It catalyses the reaction N-acetyl-alpha-D-glucosamine 1-phosphate + UTP + H(+) = UDP-N-acetyl-alpha-D-glucosamine + diphosphate. The protein operates within nucleotide-sugar biosynthesis; UDP-N-acetyl-alpha-D-glucosamine biosynthesis; N-acetyl-alpha-D-glucosamine 1-phosphate from alpha-D-glucosamine 6-phosphate (route II): step 2/2. It participates in nucleotide-sugar biosynthesis; UDP-N-acetyl-alpha-D-glucosamine biosynthesis; UDP-N-acetyl-alpha-D-glucosamine from N-acetyl-alpha-D-glucosamine 1-phosphate: step 1/1. Its pathway is bacterial outer membrane biogenesis; LPS lipid A biosynthesis. Functionally, catalyzes the last two sequential reactions in the de novo biosynthetic pathway for UDP-N-acetylglucosamine (UDP-GlcNAc). The C-terminal domain catalyzes the transfer of acetyl group from acetyl coenzyme A to glucosamine-1-phosphate (GlcN-1-P) to produce N-acetylglucosamine-1-phosphate (GlcNAc-1-P), which is converted into UDP-GlcNAc by the transfer of uridine 5-monophosphate (from uridine 5-triphosphate), a reaction catalyzed by the N-terminal domain. The protein is Bifunctional protein GlmU of Actinobacillus pleuropneumoniae serotype 5b (strain L20).